We begin with the raw amino-acid sequence, 49 residues long: Small, acid-soluble spore protein O (49 aa).

The disordered stretch occupies residues 1 to 49 (MGKRKANHIVPGMNAASAQGQGTGYNEEFANEPLTAAQRQNNKKRKKNQ).

It belongs to the SspO family.

The protein localises to the spore core. The polypeptide is Small, acid-soluble spore protein O (Bacillus cytotoxicus (strain DSM 22905 / CIP 110041 / 391-98 / NVH 391-98)).